Consider the following 521-residue polypeptide: Jacalin-related lectin 38 (521 aa).

Residues 2-48 (MQPDHDLPYDLEGEILSHLPIQILARFRCVCKRWNTLFKERRFFNSD) form the F-box domain. Kelch repeat units follow at residues 145–190 (KHYK…PYSV), 326–373 (YIYI…ITQH), and 486–521 (MSFV…SPLP). A Jacalin-type lectin domain is found at 377 to 519 (SRFAPLRGIQ…LTAFGVHFSP (143 aa)).

The protein belongs to the jacalin lectin family.

This Arabidopsis thaliana (Mouse-ear cress) protein is Jacalin-related lectin 38 (JAL38).